We begin with the raw amino-acid sequence, 214 residues long: STS14 protein (214 aa).

Positions 1 to 19 are cleaved as a signal peptide; sequence MFVLSTAMACLVYIYIYIY. Repeat copies occupy residues 13–14, 15–16, and 17–18. Residues 13 to 18 form a 3 X 2 AA tandem repeats of Y-I region; it reads YIYIYI. The region spanning 80–200 is the SCP domain; the sequence is LDAHNKARSE…YEGPATLTVC (121 aa).

Belongs to the CRISP family. Highly expressed in the stigma and stylar cortex throughout pistil development. Not expressed in other organs.

In terms of biological role, may protect the outer tissues of the pistil from pathogen attack. The protein is STS14 protein (STS14) of Solanum tuberosum (Potato).